The chain runs to 81 residues: Cytotoxin 2b (81 aa).

A signal peptide spans 1 to 21 (MKTLLLTLVVVTTVCLDLGYT). 4 disulfide bridges follow: cysteine 24–cysteine 42, cysteine 35–cysteine 59, cysteine 63–cysteine 74, and cysteine 75–cysteine 80.

It belongs to the three-finger toxin family. Short-chain subfamily. Type IA cytotoxin sub-subfamily. In terms of assembly, monomer in solution; Homodimer and oligomer in the presence of negatively charged lipids forming a pore with a size ranging between 20 and 30 Angstroms. Expressed by the venom gland.

Its subcellular location is the secreted. The protein resides in the target cell membrane. Shows cytolytic activity on many different cells by forming pore in lipid membranes. In vivo, increases heart rate or kills the animal by cardiac arrest. In addition, it binds to heparin with high affinity, interacts with Kv channel-interacting protein 1 (KCNIP1) in a calcium-independent manner, and binds to integrin alpha-V/beta-3 (ITGAV/ITGB3) with moderate affinity. This is Cytotoxin 2b from Naja sputatrix (Malayan spitting cobra).